The following is a 271-amino-acid chain: tRNA (guanine-N(7)-)-methyltransferase (271 aa).

S-adenosyl-L-methionine-binding residues include glutamate 95, glutamate 120, aspartate 147, and aspartate 175. Residue aspartate 175 is part of the active site. Residues lysine 179, aspartate 211, and 249-252 (THFE) contribute to the substrate site.

It belongs to the class I-like SAM-binding methyltransferase superfamily. TrmB family.

The enzyme catalyses guanosine(46) in tRNA + S-adenosyl-L-methionine = N(7)-methylguanosine(46) in tRNA + S-adenosyl-L-homocysteine. It participates in tRNA modification; N(7)-methylguanine-tRNA biosynthesis. Functionally, catalyzes the formation of N(7)-methylguanine at position 46 (m7G46) in tRNA. This chain is tRNA (guanine-N(7)-)-methyltransferase, found in Rhodopirellula baltica (strain DSM 10527 / NCIMB 13988 / SH1).